The chain runs to 398 residues: Sphingosine 1-phosphate receptor 5 (398 aa).

Topologically, residues 1 to 40 are extracellular; sequence MEPGLLRPAPVSEVIVLHYNYTGKLRGARYQPGAGLRADA. The N-linked (GlcNAc...) asparagine glycan is linked to Asn-20. The chain crosses the membrane as a helical span at residues 41 to 61; the sequence is VVCLAVCALIVLENLAVLVVL. At 62-70 the chain is on the cytoplasmic side; sequence GRHPRFHAP. The helical transmembrane segment at 71 to 91 threads the bilayer; it reads MFLLLGSLTLSDLLAGAAYAA. Over 92–111 the chain is Extracellular; that stretch reads NILLSGPLTLRLSPALWFAR. A helical transmembrane segment spans residues 112 to 132; sequence EGGVFVALAASVLSLLAIALE. At 133 to 151 the chain is on the cytoplasmic side; the sequence is RLLTMERRGPAPAARRGRT. The helical transmembrane segment at 152 to 172 threads the bilayer; sequence LALAAGAWGVSLLLGLLPALG. The Extracellular portion of the chain corresponds to 173 to 191; it reads WNCLGRLEACSTVLPLYAK. A helical membrane pass occupies residues 192–212; that stretch reads AYVLFCVLAFVGILAAICGLY. Residues 213–252 lie on the Cytoplasmic side of the membrane; it reads ARIYCQVRAKAQRLRARPGAGEGTSARARGTPRSLALLRT. A helical membrane pass occupies residues 253–273; that stretch reads LSVVLVAFVACWGPLFLLLLL. Residues 274–287 are Extracellular-facing; it reads DVACPARACPVLLQ. The chain crosses the membrane as a helical span at residues 288–308; sequence ADPFLGLAMANSLLNPIIYTF. The Cytoplasmic segment spans residues 309–398; it reads TNRDLRHALL…QTLVPPPAAD (90 aa). Cys-323 carries S-palmitoyl cysteine lipidation. Residues 332-398 are disordered; sequence SGTSRSPGST…QTLVPPPAAD (67 aa). A compositionally biased stretch (low complexity) spans 334-343; it reads TSRSPGSTLG. Ser-337 is subject to Phosphoserine. The span at 359 to 373 shows a compositional bias: basic and acidic residues; the sequence is SSSRSERSSPQRDGL. Phosphoserine is present on Ser-381.

It belongs to the G-protein coupled receptor 1 family.

It is found in the cell membrane. Its function is as follows. Receptor for the lysosphingolipid sphingosine 1-phosphate (S1P). S1P is a bioactive lysophospholipid that elicits diverse physiological effect on most types of cells and tissues. Is coupled to both the G(i/O)alpha and G(12) subclass of heteromeric G-proteins. This is Sphingosine 1-phosphate receptor 5 (S1PR5) from Sus scrofa (Pig).